The chain runs to 184 residues: Protein Syd (184 aa).

The protein belongs to the Syd family.

The protein localises to the cell inner membrane. Interacts with the SecY protein in vivo. May bind preferentially to an uncomplexed state of SecY, thus functioning either as a chelating agent for excess SecY in the cell or as a regulatory factor that negatively controls the translocase function. This chain is Protein Syd, found in Edwardsiella ictaluri (strain 93-146).